The chain runs to 359 residues: Peptide chain release factor 1 (359 aa).

Q235 carries the post-translational modification N5-methylglutamine. Residues 285–305 (KRDSEISQMRKSQIGSGDRSE) are disordered. Residues 290–299 (ISQMRKSQIG) are compositionally biased toward polar residues.

The protein belongs to the prokaryotic/mitochondrial release factor family. Post-translationally, methylated by PrmC. Methylation increases the termination efficiency of RF1.

It is found in the cytoplasm. Functionally, peptide chain release factor 1 directs the termination of translation in response to the peptide chain termination codons UAG and UAA. The polypeptide is Peptide chain release factor 1 (Ehrlichia canis (strain Jake)).